We begin with the raw amino-acid sequence, 430 residues long: MSAGNMSHDLGPPRDPLAIVIPVTVVYSLIFITGVVGNISTCIVIKKNRSMHTATNYYLFSLAISDFLLLLSGVPQEVSYIWSKYPYVFGEYICIGRGLLAETSANATVLTITAFTVERYIAICHPFLGQAMSKLSRAIRIIVLVWIMAIVTAIPQAAQFGIEHYSGVEQCGIVRVIVKHSFQLSTFIFFLAPMSIILVLYLLIGVHLYRSTLVEGPASVARRQQLKSVPSDTILYRYGGSGTAMSFNGGGSGAGTAGLMGGSGAQLSSVRGRLNHYGTRRVLRMLVAVVVCFFLCWAPFHAQRLIAIYAPARGAKLRDQHEFVYTVMTYVSGVLYYLSTCINPLLYNIMSHKFREAFKAVLFGKKVSKGSLNSRNNIESRRLRRALTNSSQTQRFSIESAEQPKPSIMQNPTNKPPVAAQYAMIGVQVN.

Residues 1 to 16 (MSAGNMSHDLGPPRDP) lie on the Extracellular side of the membrane. An N-linked (GlcNAc...) asparagine glycan is attached at asparagine 5. Residues 17–37 (LAIVIPVTVVYSLIFITGVVG) traverse the membrane as a helical segment. The Cytoplasmic segment spans residues 38-53 (NISTCIVIKKNRSMHT). The helical transmembrane segment at 54–74 (ATNYYLFSLAISDFLLLLSGV) threads the bilayer. At 75–96 (PQEVSYIWSKYPYVFGEYICIG) the chain is on the extracellular side. Cysteines 94 and 171 form a disulfide. The chain crosses the membrane as a helical span at residues 97 to 117 (RGLLAETSANATVLTITAFTV). At 118 to 140 (ERYIAICHPFLGQAMSKLSRAIR) the chain is on the cytoplasmic side. A helical membrane pass occupies residues 141 to 161 (IIVLVWIMAIVTAIPQAAQFG). Residues 162–185 (IEHYSGVEQCGIVRVIVKHSFQLS) lie on the Extracellular side of the membrane. A helical transmembrane segment spans residues 186–206 (TFIFFLAPMSIILVLYLLIGV). Residues 207–281 (HLYRSTLVEG…GRLNHYGTRR (75 aa)) lie on the Cytoplasmic side of the membrane. The chain crosses the membrane as a helical span at residues 282-302 (VLRMLVAVVVCFFLCWAPFHA). Topologically, residues 303–321 (QRLIAIYAPARGAKLRDQH) are extracellular. The helical transmembrane segment at 322–342 (EFVYTVMTYVSGVLYYLSTCI) threads the bilayer. Residues 343 to 430 (NPLLYNIMSH…QYAMIGVQVN (88 aa)) lie on the Cytoplasmic side of the membrane. Residues 388-397 (TNSSQTQRFS) show a composition bias toward polar residues. The interval 388–413 (TNSSQTQRFSIESAEQPKPSIMQNPT) is disordered.

Belongs to the G-protein coupled receptor 1 family.

Its subcellular location is the cell membrane. Its function is as follows. Receptor for the neuropeptide CAP-3/pyrokinin-1 (TGPSASSGLWFGPRL-amide). Also activated weakly by other neuropeptides terminating in the sequence PRL-amide including pyrokinin-2, Hug-gamma, and ecdysis-triggering-hormone-1. The activity of this receptor is mediated by G proteins which activate a phosphatidyl-inositol-calcium second messenger system. The sequence is that of Pyrokinin-1 receptor from Drosophila melanogaster (Fruit fly).